The following is a 262-amino-acid chain: Hemin import ATP-binding protein HmuV (262 aa).

Positions 3-244 constitute an ABC transporter domain; it reads LQARNLTLAR…DHMRRVYGIE (242 aa). 35–42 is a binding site for ATP; the sequence is GANGAGKS.

The protein belongs to the ABC transporter superfamily. Heme (hemin) importer (TC 3.A.1.14.5) family. As to quaternary structure, the complex is composed of two ATP-binding proteins (HmuV), two transmembrane proteins (HmuU) and a solute-binding protein (HmuT).

It is found in the cell inner membrane. In terms of biological role, part of the ABC transporter complex HmuTUV involved in hemin import. Responsible for energy coupling to the transport system. This chain is Hemin import ATP-binding protein HmuV, found in Bordetella pertussis (strain Tohama I / ATCC BAA-589 / NCTC 13251).